A 644-amino-acid polypeptide reads, in one-letter code: Acetyl-coenzyme A synthetase (644 aa).

Residues 189-192 (RGGK) and Thr-307 contribute to the CoA site. ATP is bound by residues 383-385 (GEP), 407-412 (DTWWQT), Asp-496, and Arg-511. Residue Ser-519 coordinates CoA. Arg-522 is an ATP binding site. 3 residues coordinate Mg(2+): Val-533, His-535, and Val-538. Residue Arg-580 participates in CoA binding. The residue at position 605 (Lys-605) is an N6-acetyllysine.

Belongs to the ATP-dependent AMP-binding enzyme family. Mg(2+) is required as a cofactor. Acetylated. Deacetylation by the SIR2-homolog deacetylase activates the enzyme.

It catalyses the reaction acetate + ATP + CoA = acetyl-CoA + AMP + diphosphate. Functionally, catalyzes the conversion of acetate into acetyl-CoA (AcCoA), an essential intermediate at the junction of anabolic and catabolic pathways. AcsA undergoes a two-step reaction. In the first half reaction, AcsA combines acetate with ATP to form acetyl-adenylate (AcAMP) intermediate. In the second half reaction, it can then transfer the acetyl group from AcAMP to the sulfhydryl group of CoA, forming the product AcCoA. In Rubrobacter xylanophilus (strain DSM 9941 / JCM 11954 / NBRC 16129 / PRD-1), this protein is Acetyl-coenzyme A synthetase.